Reading from the N-terminus, the 259-residue chain is MKHSKKLLLCISFLLITFFISGCGFMNKDDSKETEIKKSFNKTLSMYPIKNLEDLYDKEGYRDEEFDKDDKGTWLLHSEMAIQRKGEDLETRGMVLKINRNTQTSKGDYITNKITYDNKGRPQSNKKKYPVKMENNKIIPIKKIEDSKINREINEFKFFAQYANFKELKDYKNGNISYNPNVPSYSAEYDLENTDYNVKQLRERYDIPTKQAPKLLLKGTGDLKGSSIGTKDVEFTFVKGKQENIYFSDSMNFMPSEDD.

The N-terminal stretch at 1–22 (MKHSKKLLLCISFLLITFFISG) is a signal peptide. Residue Cys23 is the site of N-palmitoyl cysteine attachment. Residue Cys23 is the site of S-diacylglycerol cysteine attachment.

Belongs to the staphylococcal tandem lipoprotein family.

The protein localises to the cell membrane. This is an uncharacterized protein from Staphylococcus epidermidis (strain ATCC 35984 / DSM 28319 / BCRC 17069 / CCUG 31568 / BM 3577 / RP62A).